The sequence spans 63 residues: 2-hydroxymuconate tautomerase (63 aa).

The active-site Proton acceptor; via imino nitrogen is the proline 2.

Belongs to the 4-oxalocrotonate tautomerase family. As to quaternary structure, homohexamer.

It catalyses the reaction (2Z,4E)-2-hydroxyhexa-2,4-dienedioate = (3E)-2-oxohex-3-enedioate. Its pathway is aromatic compound metabolism; salicylate degradation. In terms of biological role, catalyzes the ketonization of 2-hydroxymuconate stereoselectively to yield 2-oxo-3-hexenedioate. This is 2-hydroxymuconate tautomerase (nahJ) from Stutzerimonas stutzeri (Pseudomonas stutzeri).